The primary structure comprises 846 residues: cGMP-dependent protein kinase (846 aa).

An autoinhibitory segment region spans residues 1–22 (MRCNERNKKKAIFSNDDFSGED). CNMP-binding domain stretches follow at residues 51-166 (VCST…FIDS), 169-268 (VFDM…IVLG), 288-391 (IFRQ…LGDN), and 411-510 (IFRY…LQII). Positions 106, 115, 116, 118, 125, and 126 each coordinate 3',5'-cyclic GMP. Residues Arg466, Gly475, Glu476, Ala478, Arg485, and Thr486 each contribute to the 3',5'-cyclic GMP site. Residues 534–791 (LETERIIGRG…FKDIKEHAFF (258 aa)) enclose the Protein kinase domain. ATP contacts are provided by residues 540–548 (IGRGTFGTV) and Lys563. Asp657 functions as the Proton acceptor in the catalytic mechanism. The AGC-kinase C-terminal domain occupies 792–846 (GNFNWDKLAGRLLEPPLVSKGETYAEDIDIKQIEEEDALNEGEPLDGDDSWDVDF). Residues 824–846 (IEEEDALNEGEPLDGDDSWDVDF) form a disordered region. The segment covering 825-846 (EEEDALNEGEPLDGDDSWDVDF) has biased composition (acidic residues).

It belongs to the protein kinase superfamily. AGC Ser/Thr protein kinase family. cGMP subfamily. In terms of assembly, monomer. The cofactor is Mg(2+). Autophosphorylated.

The protein localises to the cytoplasm. It localises to the endoplasmic reticulum membrane. It catalyses the reaction L-seryl-[protein] + ATP = O-phospho-L-seryl-[protein] + ADP + H(+). The catalysed reaction is L-threonyl-[protein] + ATP = O-phospho-L-threonyl-[protein] + ADP + H(+). With respect to regulation, activated by cGMP. Not activated by cAMP. cGMP binding allosterically triggers a conformational change at the alpha C-helix of cGMP-binding domain 4, which bridges the regulatory and catalytic domains, causing the capping triad, composed of Arg-477, Gln-525 and Asp-526, to form and stabilize the active conformation. The cGMP-binding domains acts cooperatively to activate PKG. Its function is as follows. Serine/threonine protein kinase which acts as a downstream effector of the second messenger cGMP. Controls the release of Ca(2+) from intracellular stores by regulating phosphoinositide biosynthesis. Ca(2+) signals are essential for merozoite and sporozoite invasion and egress from host hepatocytes and erythrocytes, and, in the mosquito vector, for gametocyte activation, and ookinete and sporozoite motility. During the host liver stage, regulates the initial invasion of host hepatocytes by sporozoites by regulating sporozoite motility and microneme exocytosis. Following parasite development in the hepatocytes, required for the release of merosomes, a vesicle containing the mature merozoites. During the asexual blood stage, required for the progression from schizont to the ring stage following merozoite invasion of host erythrocytes and for merozoite egress. Regulates merozoite egress by promoting the release of exonemes and micronemes which contain proteins essential for egress. Phosphorylates CDPK1 predominantly at the late schizont stage; phosphorylation at 'Ser-64' regulates CDPK1 protein-protein interaction and phosphorylation at 'Thr-231' may regulate CDPK1 kinase activity. In the mosquito vector, required for the initiation of gametogenesis induced by xanthurenic acid, specifically the gametocyte differentiation from the crescent-shaped form to the spherical form. Required for the gliding motility of ookinetes to reach and penetrate the midgut epithelium by promoting Ca(2+)-mediated activation of CDPK1 and CDPK4. Also required for microneme secretion in ookinete by promoting Ca(2+)-mediated activation of CDPK3. The protein is cGMP-dependent protein kinase of Plasmodium vivax (strain Salvador I).